The primary structure comprises 399 residues: MKILVINSGSSSIKFKLYDMSDESVICKGLIEQIGAKNSYAKIVTKTGEIAEKREEIPDHGTGIDVMNELLFNSHALTSLDEIDGVGHRVVQGADLFNDAVLVDDDVLQKIEELIPLAPLHNPAHLAGMKETLKVRPDIPNVAVFDTVFHQTMPKSSYMYPLPIEFYEKYKIRRYGAHGTSHQFVAKAGAKILGVDFDHFSCITLHLGNGASIAAIKNGKCIDTSMGLTPLEGLMMGTRCGSIDPAIVPFLMKNANLSGEEIDTIMNKKSGLLAIGGSNDMREIEARMDAGDENAKLAFEMFVLRIKKYIGAYISILGEINAIIFTAGIGENDARIREAVCSGLEIFGIRMDKDKNAAKKDEPRRVGLPETKVRIIIVPTDEELAIAEDTLRIINQSKK.

Position 7 (asparagine 7) interacts with Mg(2+). Lysine 14 is an ATP binding site. Substrate is bound at residue arginine 89. Catalysis depends on aspartate 146, which acts as the Proton donor/acceptor. ATP contacts are provided by residues 206-210 (HLGNG), 280-282 (DMR), and 328-332 (GIGEN). Glutamate 382 lines the Mg(2+) pocket.

This sequence belongs to the acetokinase family. As to quaternary structure, homodimer. It depends on Mg(2+) as a cofactor. Mn(2+) serves as cofactor.

The protein localises to the cytoplasm. The catalysed reaction is acetate + ATP = acetyl phosphate + ADP. It functions in the pathway metabolic intermediate biosynthesis; acetyl-CoA biosynthesis; acetyl-CoA from acetate: step 1/2. In terms of biological role, catalyzes the formation of acetyl phosphate from acetate and ATP. Can also catalyze the reverse reaction. The sequence is that of Acetate kinase from Campylobacter fetus subsp. fetus (strain 82-40).